Here is a 178-residue protein sequence, read N- to C-terminus: Small ribosomal subunit protein uS4 (178 aa).

An S4 RNA-binding domain is found at 104-166 (RRLQTIVYRK…PNSPMASENH (63 aa)). Positions 158-178 (NSPMASENHPERTAAVSEENQ) are disordered.

This sequence belongs to the universal ribosomal protein uS4 family. As to quaternary structure, part of the 30S ribosomal subunit. Contacts protein S5. The interaction surface between S4 and S5 is involved in control of translational fidelity.

In terms of biological role, one of the primary rRNA binding proteins, it binds directly to 16S rRNA where it nucleates assembly of the body of the 30S subunit. Functionally, with S5 and S12 plays an important role in translational accuracy. The polypeptide is Small ribosomal subunit protein uS4 (Methanococcus maripaludis (strain C5 / ATCC BAA-1333)).